Reading from the N-terminus, the 1941-residue chain is Myosin light chain kinase, smooth muscle (1941 aa).

Ig-like C2-type domains lie at 33–122 and 156–244; these read PAFI…VELT and PKFA…AELS. Cys-177 and Cys-228 are oxidised to a cystine. The residue at position 226 (Tyr-226) is a Phosphotyrosine; by ABL1. The segment at 255–329 is disordered; it reads AVRGTKAPSP…RKVPQSSILQ (75 aa). Positions 286–305 are enriched in polar residues; it reads NCPSPQRSGSSARATNSHLK. Ser-295 is modified (phosphoserine). The span at 306–320 shows a compositional bias: basic and acidic residues; the sequence is SPQEPKPKLCEDAPR. Residues Ser-333 and Ser-355 each carry the phosphoserine modification. Ig-like C2-type domains lie at 402–485, 502–587, 611–699, and 709–809; these read PRFE…GQVS, PSFS…ATVT, PIFL…AVLT, and PWFI…APPR. Intrachain disulfides connect Cys-423/Cys-475 and Cys-523/Cys-571. Tyr-452 carries the post-translational modification Phosphotyrosine; by ABL1 and SRC. Cys-730 and Cys-793 are disulfide-bonded. Tyr-780 bears the Phosphotyrosine; by ABL1 mark. 4 tandem repeats follow at residues 856–883, 884–911, 912–939, and 940–966. A 5 X 28 AA approximate tandem repeats region spans residues 856–985; sequence DVRGLLKRRV…KKSPSENGGN (130 aa). Residues 911-951 are actin-binding (calcium/calmodulin-sensitive); it reads MDFRANLQRQVKPKTISEEERKVHSPQQVDFRSVLAKKGTP. The segment at 920-1120 is disordered; the sequence is QVKPKTISEE…KRPESQGSAP (201 aa). The residue at position 935 (Ser-935) is a Phosphoserine. The calmodulin-binding stretch occupies residues 936-951; that stretch reads PQQVDFRSVLAKKGTP. The stretch at 967–985 is one 1-5; truncated repeat; the sequence is DFRSVLGGKKKSPSENGGN. Tandem repeats lie at residues 990-1002, 1003-1014, 1015-1026, 1027-1038, and 1039-1049. The interval 990–1049 is 5 X 12 AA approximate tandem repeats; sequence LNVKAGESPTPAGDAQAIGALKPVGNAKPAETPKPIGNAKPTETLKPVGNTKPAETLKPI. The segment at 1048–1482 is actin-binding (calcium/calmodulin-insensitive); that stretch reads PIANAQPSGS…TVTVNTEQKV (435 aa). The span at 1052 to 1065 shows a compositional bias: polar residues; it reads AQPSGSLKPVTNAQ. Basic and acidic residues predominate over residues 1085–1099; sequence AGKEEVKEVKNDVNC. The Ig-like C2-type 7 domain maps to 1120–1208; sequence PVFKEKLQDV…GQAECSCQVT (89 aa). Residues Cys-1141 and Cys-1192 are joined by a disulfide bond. The interval 1212 to 1257 is disordered; sequence AQTSENTKAPEMKSRRPKSSLPPVLGTESDATVKKKPAPKTPTKAA. An Ig-like C2-type 8 domain is found at 1260–1348; that stretch reads PQIIQFPEDQ…GSRQAQVNLT (89 aa). The Fibronectin type-III domain occupies 1356–1449; it reads PAGTPCASDI…ESELTAVGEK (94 aa). Positions 1435–1469 are disordered; it reads SEPSQESELTAVGEKPEEPKDEVEVSDDDEKEPEV. The segment covering 1453–1467 has biased composition (acidic residues); it reads PKDEVEVSDDDEKEP. Ser-1460 bears the Phosphoserine mark. Tyr-1471 bears the Phosphotyrosine; by ABL1 mark. The Protein kinase domain maps to 1486 to 1741; the sequence is YDIEERLGSG…CTQCLQHPWL (256 aa). Residues 1492 to 1500 and Lys-1515 each bind ATP; that span reads LGSGKFGQV. At Tyr-1597 the chain carries Phosphotyrosine; by ABL1. The active-site Proton acceptor is Asp-1607. A Phosphotyrosine; by ABL1 modification is found at Tyr-1657. A calmodulin-binding region spans residues 1733-1796; sequence TQCLQHPWLM…SGLSGRKSST (64 aa). 5 positions are modified to phosphoserine: Ser-1781, Ser-1782, Ser-1794, Ser-1795, and Ser-1798. A disordered region spans residues 1789–1809; that stretch reads LSGRKSSTGSPTSPINAEKLE. The span at 1792–1803 shows a compositional bias: polar residues; the sequence is RKSSTGSPTSPI. Thr-1800 is modified (phosphothreonine). Ser-1801 is modified (phosphoserine). The 90-residue stretch at 1831 to 1920 folds into the Ig-like C2-type 9 domain; that stretch reads PYFSKTIRDL…GEATCTAELI (90 aa). An intrachain disulfide couples Cys-1852 to Cys-1904.

The protein belongs to the protein kinase superfamily. CAMK Ser/Thr protein kinase family. All isoforms including Telokin bind calmodulin. Interacts with CTTN; this interaction is reduced during thrombin-induced endothelial cell (EC) contraction but is promoted by the barrier-protective agonist sphingosine 1-phosphate (S1P) within lamellipodia. A complex made of ABL1, CTTN and MYLK regulates cortical actin-based cytoskeletal rearrangement critical to sphingosine 1-phosphate (S1P)-mediated endothelial cell (EC) barrier enhancement. Binds to NAA10/ARD1. Interacts with SVIL and PTK2B/PYK2. The cofactor is Mg(2+). Ca(2+) is required as a cofactor. Post-translationally, can probably be down-regulated by phosphorylation. Tyrosine phosphorylation by ABL1 increases kinase activity, reverses MLCK-mediated inhibition of Arp2/3-mediated actin polymerization, and enhances CTTN-binding. Phosphorylation by SRC at Tyr-452 promotes CTTN binding. In terms of processing, the C-terminus is deglutamylated by AGTPBP1/CCP1, AGBL1/CCP4 and AGBL4/CCP6, leading to the formation of Myosin light chain kinase, smooth muscle, deglutamylated form. The consequences of C-terminal deglutamylation are unknown. Smooth muscle isoform is expressed in all tissues with highest levels in bladder, uterus, vas deferens, colon, ileum, and tracheae. Isoform 1 is expressed in lung, bladder, and vas deferens. Telokin is expressed in smooth muscle cells of the gut, reproductive tract and urinary tract, including in uterus, vas deferens, bladder, colon, kidney, ureter and ovary. Telokin is also detected in the trachea.

It localises to the cytoplasm. The protein localises to the cell projection. Its subcellular location is the lamellipodium. It is found in the cleavage furrow. The protein resides in the cytoskeleton. It localises to the stress fiber. The catalysed reaction is L-seryl-[myosin light chain] + ATP = O-phospho-L-seryl-[myosin light chain] + ADP + H(+). It catalyses the reaction L-threonyl-[myosin light chain] + ATP = O-phospho-L-threonyl-[myosin light chain] + ADP + H(+). Functionally, calcium/calmodulin-dependent myosin light chain kinase implicated in smooth muscle contraction via phosphorylation of myosin light chains (MLC). Also regulates actin-myosin interaction through a non-kinase activity. Phosphorylates PTK2B/PYK2 and myosin light-chains. Involved in the inflammatory response (e.g. apoptosis, vascular permeability, leukocyte diapedesis), cell motility and morphology, airway hyperreactivity and other activities relevant to asthma. Required for tonic airway smooth muscle contraction that is necessary for physiological and asthmatic airway resistance. Necessary for gastrointestinal motility. Implicated in the regulation of endothelial as well as vascular permeability, probably via the regulation of cytoskeletal rearrangements. In the nervous system it has been shown to control the growth initiation of astrocytic processes in culture and to participate in transmitter release at synapses formed between cultured sympathetic ganglion cells. Critical participant in signaling sequences that result in fibroblast apoptosis. Plays a role in the regulation of epithelial cell survival. Required for epithelial wound healing, especially during actomyosin ring contraction during purse-string wound closure. Mediates RhoA-dependent membrane blebbing. Triggers TRPC5 channel activity in a calcium-dependent signaling, by inducing its subcellular localization at the plasma membrane. Promotes cell migration (including tumor cells) and tumor metastasis. PTK2B/PYK2 activation by phosphorylation mediates ITGB2 activation and is thus essential to trigger neutrophil transmigration during acute lung injury (ALI). May regulate optic nerve head astrocyte migration. Probably involved in mitotic cytoskeletal regulation. Regulates tight junction probably by modulating ZO-1 exchange in the perijunctional actomyosin ring. Mediates burn-induced microvascular barrier injury; triggers endothelial contraction in the development of microvascular hyperpermeability by phosphorylating MLC. Essential for intestinal barrier dysfunction. Mediates Giardia spp.-mediated reduced epithelial barrier function during giardiasis intestinal infection via reorganization of cytoskeletal F-actin and tight junctional ZO-1. Necessary for hypotonicity-induced Ca(2+) entry and subsequent activation of volume-sensitive organic osmolyte/anion channels (VSOAC) in cervical cancer cells. This is Myosin light chain kinase, smooth muscle from Mus musculus (Mouse).